Consider the following 141-residue polypeptide: 16 kDa protein (141 aa).

The disordered stretch occupies residues 100–119 (TVKKSRNSKPSKKKFKERKE). A compositionally biased stretch (basic residues) spans 102-115 (KKSRNSKPSKKKFK).

The chain is 16 kDa protein from Tobacco rattle virus (strain PLB).